The sequence spans 237 residues: Oil body-associated protein 2C (237 aa).

Belongs to the OBAP family.

The polypeptide is Oil body-associated protein 2C (Arabidopsis thaliana (Mouse-ear cress)).